The primary structure comprises 906 residues: Cadherin-2 (906 aa).

An N-terminal signal peptide occupies residues 1-25 (MCRIAGAPRTLLPLLAALLQASVEA). A propeptide spanning residues 26–159 (SGEIALCKTG…HNGYLQRQKR (134 aa)) is cleaved from the precursor. Serine 96 and serine 135 each carry phosphoserine. Cadherin domains are found at residues 160–267 (DWVI…RPEF), 268–382 (LHQV…PPEF), 383–497 (TAMT…NPYF), 498–603 (APNP…DNAP), and 604–714 (QVLP…DVDR). Residues 160 to 724 (DWVIPPINLP…IVGAGLGTGA (565 aa)) are Extracellular-facing. Position 170 (glutamate 170) interacts with Ca(2+). Asparagine 190 carries N-linked (GlcNAc...) asparagine glycosylation. Aspartate 226, glutamate 228, aspartate 259, methionine 260, asparagine 261, aspartate 262, and asparagine 263 together coordinate Ca(2+). Asparagine 273 carries N-linked (GlcNAc...) asparagine glycosylation. 3 residues coordinate Ca(2+): aspartate 293, aspartate 295, and asparagine 301. A glycan (N-linked (GlcNAc...) asparagine) is linked at asparagine 325. Aspartate 353 lines the Ca(2+) pocket. N-linked (GlcNAc...) asparagine glycosylation is found at asparagine 402, asparagine 572, asparagine 622, asparagine 651, and asparagine 692. Residues 725–745 (IIAILLCIIILLILVLMFVVW) form a helical membrane-spanning segment. Topologically, residues 746–906 (MKRRDKERQA…LAEMYGGGDD (161 aa)) are cytoplasmic. The span at 863 to 880 (SGSTAGSLSSLNSSSSGG) shows a compositional bias: low complexity. Positions 863–884 (SGSTAGSLSSLNSSSSGGEQDY) are disordered.

As to quaternary structure, homodimer (via extracellular region). Can also form heterodimers with other cadherins (via extracellular region). Dimerization occurs in trans, i.e. with a cadherin chain from another cell. Interacts with CDCP1. Interacts with PCDH8; this complex may also include TAOK2. The interaction with PCDH8 may lead to internalization through TAOK2/p38 MAPK pathway. Identified in a complex containing FGFR4, NCAM1, CDH2, PLCG1, FRS2, SRC, SHC1, GAP43 and CTTN. May interact with OBSCN (via protein kinase domain 2). Interacts with FBXO45. Post-translationally, cleaved by MMP24. Ectodomain cleavage leads to the generation of a soluble 90 kDa N-terminal soluble fragment and a 45 kDa membrane-bound C-terminal fragment 1 (CTF1), which is further cleaved by gamma-secretase into a 35 kDa. Cleavage in neural stem cells by MMP24 affects CDH2-mediated anchorage of neural stem cells to ependymocytes in the adult subependymal zone, leading to modulate neural stem cell quiescence. In terms of processing, may be phosphorylated by OBSCN.

The protein resides in the cell membrane. It is found in the sarcolemma. It localises to the cell junction. Its subcellular location is the cell surface. The protein localises to the desmosome. The protein resides in the adherens junction. Functionally, calcium-dependent cell adhesion protein; preferentially mediates homotypic cell-cell adhesion by dimerization with a CDH2 chain from another cell. Cadherins may thus contribute to the sorting of heterogeneous cell types. Acts as a regulator of neural stem cells quiescence by mediating anchorage of neural stem cells to ependymocytes in the adult subependymal zone: upon cleavage by MMP24, CDH2-mediated anchorage is affected, leading to modulate neural stem cell quiescence. Plays a role in cell-to-cell junction formation between pancreatic beta cells and neural crest stem (NCS) cells, promoting the formation of processes by NCS cells. Required for proper neurite branching. Required for pre- and postsynaptic organization. CDH2 may be involved in neuronal recognition mechanism. In hippocampal neurons, may regulate dendritic spine density. This Otolemur garnettii (Small-eared galago) protein is Cadherin-2 (CDH2).